The following is a 297-amino-acid chain: Homoserine kinase (297 aa).

Position 82-92 (82-92 (PLTRGLGSSAS)) interacts with ATP.

This sequence belongs to the GHMP kinase family. Homoserine kinase subfamily.

The protein resides in the cytoplasm. It catalyses the reaction L-homoserine + ATP = O-phospho-L-homoserine + ADP + H(+). Its pathway is amino-acid biosynthesis; L-threonine biosynthesis; L-threonine from L-aspartate: step 4/5. Its function is as follows. Catalyzes the ATP-dependent phosphorylation of L-homoserine to L-homoserine phosphate. The chain is Homoserine kinase from Bacillus cereus (strain ATCC 10987 / NRS 248).